Consider the following 745-residue polypeptide: Copper-transporting ATPase (745 aa).

Residues 1–67 (MKESFYIEGM…LIEKLGYSPK (67 aa)) enclose the HMA domain. Residues 1-83 (MKESFYIEGM…KKEFFSPNVK (83 aa)) lie on the Cytoplasmic side of the membrane. Cys-12 and Cys-15 together coordinate Cu cation. The helical transmembrane segment at 84 to 104 (LALAVIFTLFVVYLSMGAMLS) threads the bilayer. The Extracellular segment spans residues 105 to 124 (PSLLPESLLAIDNHSNFLNA). The chain crosses the membrane as a helical span at residues 125–144 (CLQLIGALIVMHLGRDFYIQ). Over 145 to 151 (GFKALWH) the chain is Cytoplasmic. Residues 152 to 172 (RQPNMSSLIAIGTSAALISSL) form a helical membrane-spanning segment. The Extracellular segment spans residues 173 to 194 (WQLYLVYTNHYTDQWSYGHYYF). Residues 195 to 215 (ESVCVILMFVMVGKRIENVSK) form a helical membrane-spanning segment. Residues 216 to 343 (DKALDAMQAL…KAEISRLADK (128 aa)) are Cytoplasmic-facing. A helical membrane pass occupies residues 344-366 (VSSVFVPSVIAISILAFVVWLII). The Extracellular portion of the chain corresponds to 367–379 (APKPDFWWNFGIA). Residues 380–397 (LEVFVSVLVISCPCALGL) traverse the membrane as a helical segment. The Cytoplasmic portion of the chain corresponds to 398-685 (ATPMSILVAN…KLSQATIKNI (288 aa)). Asp-435 serves as the catalytic 4-aspartylphosphate intermediate. Mg(2+)-binding residues include Asp-631 and Asp-635. The helical transmembrane segment at 686 to 705 (KENLFWAFCYNSVFIPLACG) threads the bilayer. At 706 to 716 (VLYKANLMLSP) the chain is on the extracellular side. Residues 717 to 735 (AIAGLAMSLSSVSVVLNSQ) traverse the membrane as a helical segment. Over 736–745 (RLRNFKIKDH) the chain is Cytoplasmic.

This sequence belongs to the cation transport ATPase (P-type) (TC 3.A.3) family. Type IB subfamily.

The protein resides in the cell membrane. The enzyme catalyses Cu(2+)(in) + ATP + H2O = Cu(2+)(out) + ADP + phosphate + H(+). Its function is as follows. Probably involved in copper export. In Helicobacter pylori (strain ATCC 700392 / 26695) (Campylobacter pylori), this protein is Copper-transporting ATPase (copA).